The primary structure comprises 183 residues: Probable cobalt-precorrin-6B C(15)-methyltransferase (decarboxylating) (183 aa).

S-adenosyl-L-methionine is bound by residues T19, 43–47 (GCGSG), D64, and A92.

It belongs to the methyltransferase superfamily. Archaeal-type CbiT family.

It carries out the reaction Co-precorrin-6B + S-adenosyl-L-methionine = Co-precorrin-7 + S-adenosyl-L-homocysteine + CO2. The protein operates within cofactor biosynthesis; adenosylcobalamin biosynthesis; cob(II)yrinate a,c-diamide from sirohydrochlorin (anaerobic route): step 8/10. Catalyzes the methylation of C-15 in cobalt-precorrin-6B followed by the decarboxylation of C-12 to form cobalt-precorrin-7. In Methanocaldococcus jannaschii (strain ATCC 43067 / DSM 2661 / JAL-1 / JCM 10045 / NBRC 100440) (Methanococcus jannaschii), this protein is Probable cobalt-precorrin-6B C(15)-methyltransferase (decarboxylating).